The primary structure comprises 702 residues: BRCA1-associated RING domain protein 1 (702 aa).

The RING-type zinc-finger motif lies at 18–67 (CVKCKKPRGDLQYLGSSCKHAYCWECIATFQQKPSGKRSSVARHMCPSCA). Disordered stretches follow at residues 153–205 (DENR…TSVK) and 281–346 (ASMS…YGTR). The segment covering 174–188 (ASPTRNSTKRPSTVS) has biased composition (polar residues). Over residues 312–321 (IKSDKIERRS) the composition is skewed to basic and acidic residues. ANK repeat units lie at residues 347-376 (RGEA…CVNE), 379-408 (DGKT…VINA), and 413-442 (TLET…SIKI). The BRCT domain maps to 601–702 (MQPKLFAGCK…LGCSITTPPH (102 aa)).

Heterodimer (via RING-type zinc finger) with brc-1 to form the core CeBCD complex. Brc-1-brd-1 heterodimer-containing CeBCD complexes bound to chromatin are activated as an E3-ubiquitin ligase in response to DNA damage. The heterodimer interacts with the recombinase rad-51 following ionizing irradiation; the interaction is direct. The heterodimer interacts the E2-ubiquitin-conjugating enzyme let-70 following ionizing irradiation. The heterodimer interacts with the pro-crossover proteins msh-5 and syp-3. Interacts with smt-3, tac-1 and ubc-9. In terms of processing, autoubiquitinated. Phosphorylation of CeBCD complexes is required for E3 ubiquitin-protein ligase activity.

It is found in the cytoplasm. The protein localises to the nucleus. The protein resides in the chromosome. The enzyme catalyses S-ubiquitinyl-[E2 ubiquitin-conjugating enzyme]-L-cysteine + [acceptor protein]-L-lysine = [E2 ubiquitin-conjugating enzyme]-L-cysteine + N(6)-ubiquitinyl-[acceptor protein]-L-lysine.. It functions in the pathway protein modification; protein ubiquitination. Its activity is regulated as follows. E3 ubiquitin-protein ligase activity of CeBCD complexes occurs at DNA damage sites. Following DNA damage, E3 ubiquitin-protein ligase activity is reduced by caffeine treatment (inhibitor of ATM and ATK kinase activity). Constituent of the CeBCD complex that possesses E3 ubiquitin-protein ligase activity. When bound to chromatin, the brc-1-brd-1 heterodimer within the CeBCD complex is inactive during normal conditions, but in response to DNA damage, the brc-1-brd-1 heterodimer associates with other proteins such as the recombinase rad-51 or the E2-ubiquitin-conjugating enzyme let-70, which activate the CeBCD complex as an E3-ubiquitin ligase. Moreover, association between the brc-1-brd-1 heterodimer and rad-51 and let-70, probably requires DNA checkpoint proteins such as atl-1 and mre-11 in order to induce ubiquitination at DNA damage sites. To this end, the brc-1-brd-1 heterodimer coordinates a diverse range of cellular pathways such as DNA damage repair, ubiquitination and transcriptional regulation to maintain genomic stability. Plays a role in triggering cellular responses at damage sites in response to DNA damage that may be induced by ionizing radiation for example. In particular, protects against chromosome non-disjunction and nuclear fragmentation during meiotic double-strand break repair to ensure sister chromatid recombination and aid chromosome stability. This chain is BRCA1-associated RING domain protein 1, found in Caenorhabditis elegans.